The following is a 56-amino-acid chain: Ferredoxin (56 aa).

4Fe-4S ferredoxin-type domains follow at residues alanine 2–aspartate 28 and threonine 29–glutamate 56. [4Fe-4S] cluster-binding residues include cysteine 9, cysteine 12, cysteine 15, cysteine 19, cysteine 38, cysteine 41, cysteine 44, and cysteine 48.

It depends on [4Fe-4S] cluster as a cofactor.

Functionally, ferredoxins are iron-sulfur proteins that transfer electrons in a wide variety of metabolic reactions. The chain is Ferredoxin (fer) from Clostridium perfringens (strain 13 / Type A).